Reading from the N-terminus, the 200-residue chain is Adenylate kinase (200 aa).

An ATP-binding site is contributed by 10-15; that stretch reads GAGKGT. The interval 30-59 is NMP; it reads STGDLFRANISQQTELGKLAKSYMDAGNLV. Residues Thr-31, Arg-36, 57 to 59, 84 to 87, and Gln-91 each bind AMP; these read NLV and GFPR. The LID stretch occupies residues 125 to 163; the sequence is GRRVCRNDSAHVFHVTYTPPKKEGVCDVCGGELYQRDDD. Residues Arg-126 and 136 to 137 each bind ATP; that span reads VF. Arg-160 and Arg-171 together coordinate AMP.

This sequence belongs to the adenylate kinase family. In terms of assembly, monomer.

The protein localises to the cytoplasm. The catalysed reaction is AMP + ATP = 2 ADP. Its pathway is purine metabolism; AMP biosynthesis via salvage pathway; AMP from ADP: step 1/1. Functionally, catalyzes the reversible transfer of the terminal phosphate group between ATP and AMP. Plays an important role in cellular energy homeostasis and in adenine nucleotide metabolism. In Streptomyces lividans, this protein is Adenylate kinase.